A 585-amino-acid polypeptide reads, in one-letter code: FAD-linked oxidoreductase apf9 (585 aa).

A signal peptide spans 1–19 (MKPHTVSLVLSNLASLAAA). Asparagine 40, asparagine 92, and asparagine 117 each carry an N-linked (GlcNAc...) asparagine glycan. An FAD-binding PCMH-type domain is found at 108-294 (IGNSPVYVVN…TEITVKTYPT (187 aa)). A Pros-8alpha-FAD histidine modification is found at histidine 145. 3 N-linked (GlcNAc...) asparagine glycosylation sites follow: asparagine 352, asparagine 412, and asparagine 495.

The protein belongs to the oxygen-dependent FAD-linked oxidoreductase family. FAD is required as a cofactor.

It functions in the pathway secondary metabolite biosynthesis. Its function is as follows. FAD-linked oxidoreductase; part of the gene cluster that mediates the biosynthesis of the cyclic tetrapeptide apicidin F (APF). The non-ribosomal peptide synthetase apf1 incorporates four different amino acids to produce apicidin F: L-phenylalanine, D-pipecolic acid (D-pip), N-methoxy-L-tryptophan and L-2-aminooctanedioic acid. L-Phenylalanine is the only proteinogenic amino acid directly used by apf1. The 3 other apf1 substrates are non-proteinogenic and have to be modified by other enzymes of the cluster. Lysine is converted to delta-1-pyrroline-5-carboxylate (P5C) which is reduced to L-pipecolic acid (L-pip) by apf3. L-pip is epimerized to D-pip, probably by apf1 activity, prior to incorporation. L-Tryptophan is N-oxidyzed by one of the cytochrome P450 monooxygenases (apf7 or apf8), and further methylated at the hydroxy group by the O-methyltransferase apf6 to yield N-methoxy-L-tryptophan. The synthesis of the fourth apf1 substrate is more complex. The fatty acid synthase apf5 is involved in the synthesis of the octanoic acid backbone of L-2-aminooctanedioic acid by fixing one acetyl-CoA unit and three malonyl-CoA units. Then one of the cytochrome P450 monooxygenases (apf7 or apf8) may oxidize this backbone to 2-oxooctanoic acid. The aminotransferase apf4 is predicted to catalyze the exchange of the keto group with an amino group. The next step would be the oxidation of 2-aminooctanoic acid by one of the cytochrome P450 monooxygenases (apf7 or apf8). The last step is the oxidation of 2-amino-8-hydroxyoctanoic acid to 2-aminooctanedioic acid is catalyzed by the FAD-dependent monooxygenase apf9. The sequence is that of FAD-linked oxidoreductase apf9 from Gibberella fujikuroi (strain CBS 195.34 / IMI 58289 / NRRL A-6831) (Bakanae and foot rot disease fungus).